The following is a 359-amino-acid chain: MENESSESRNRARLAIMELANMISVPMSLNAAVRLGIADAIWNGGANSPLSAAEILPRLHLPSHTTIGGDPENLQRILRMLTSYGVFSEHLVGSIERKYSLTDVGKTLVTDSGGLSYAAYVLQHHQEALMRAWPLVHTAVVEPETEPYVKANGEAAYAQYGKSEEMNGLMQKAMSGVSVPFMKAILDGYDGFKSVDILVDVGGSAGDCLRMILQQFPNVREGINFDLPEVVAKAPNIPGVTHVGGDMFQSVPSADAIFMKWVLTTWTDEECKQIMKNCYNALPVGGKLIACEPVLPKETDESHRTRALLEGDIFVMTIYRTKGKHRTEEEFIELGLSAGFPTFRPFYIDYFYTILEFQK.

Asp226 serves as a coordination point for S-adenosyl-L-methionine.

It belongs to the class I-like SAM-binding methyltransferase superfamily. Cation-independent O-methyltransferase family. Highly expressed in anthers, pistils, developing siliques, and developing seeds.

The protein localises to the cytoplasm. The protein resides in the cytosol. The enzyme catalyses nicotinate + S-adenosyl-L-methionine = N-methylnicotinate + S-adenosyl-L-homocysteine. Involved in nicotinate detoxification in planta. Catalyzes the conversion of nicotinate to N-methylnicotinate, which is a detoxified form of endogenous nicotinate in planta. The chain is Nicotinate N-methyltransferase 1 from Arabidopsis thaliana (Mouse-ear cress).